The chain runs to 464 residues: Fumarate hydratase class II (464 aa).

Substrate is bound by residues 98–100 (SGT), 129–132 (HPND), 139–141 (SSN), and threonine 187. Residue histidine 188 is the Proton donor/acceptor of the active site. Serine 318 is an active-site residue. Substrate-binding positions include serine 319 and 324–326 (KVN).

The protein belongs to the class-II fumarase/aspartase family. Fumarase subfamily. In terms of assembly, homotetramer.

Its subcellular location is the cytoplasm. The enzyme catalyses (S)-malate = fumarate + H2O. The protein operates within carbohydrate metabolism; tricarboxylic acid cycle; (S)-malate from fumarate: step 1/1. Its function is as follows. Involved in the TCA cycle. Catalyzes the stereospecific interconversion of fumarate to L-malate. In Pasteurella multocida (strain Pm70), this protein is Fumarate hydratase class II.